Consider the following 467-residue polypeptide: Ribosomal protein uS12 methylthiotransferase RimO (467 aa).

The MTTase N-terminal domain occupies 1–110 (MDLHGCAKNQ…LPQLIDSMFP (110 aa)). [4Fe-4S] cluster-binding residues include Cys-6, Cys-42, Cys-73, Cys-153, Cys-157, and Cys-160. Positions 139 to 386 (LNFPRSTYIK…QNAQTSITEK (248 aa)) constitute a Radical SAM core domain. A TRAM domain is found at 389–467 (DSFIGKEIEV…NGFDLEAVAV (79 aa)).

It belongs to the methylthiotransferase family. RimO subfamily. It depends on [4Fe-4S] cluster as a cofactor.

It localises to the cytoplasm. The enzyme catalyses L-aspartate(89)-[ribosomal protein uS12]-hydrogen + (sulfur carrier)-SH + AH2 + 2 S-adenosyl-L-methionine = 3-methylsulfanyl-L-aspartate(89)-[ribosomal protein uS12]-hydrogen + (sulfur carrier)-H + 5'-deoxyadenosine + L-methionine + A + S-adenosyl-L-homocysteine + 2 H(+). Its function is as follows. Catalyzes the methylthiolation of an aspartic acid residue of ribosomal protein uS12. This Treponema denticola (strain ATCC 35405 / DSM 14222 / CIP 103919 / JCM 8153 / KCTC 15104) protein is Ribosomal protein uS12 methylthiotransferase RimO.